A 102-amino-acid chain; its full sequence is Small ribosomal subunit protein uS10 (102 aa).

This sequence belongs to the universal ribosomal protein uS10 family. Part of the 30S ribosomal subunit.

Involved in the binding of tRNA to the ribosomes. The chain is Small ribosomal subunit protein uS10 from Staphylococcus aureus (strain JH9).